Reading from the N-terminus, the 154-residue chain is Large ribosomal subunit protein uL13 (154 aa).

Belongs to the universal ribosomal protein uL13 family. Part of the 50S ribosomal subunit.

Its function is as follows. This protein is one of the early assembly proteins of the 50S ribosomal subunit, although it is not seen to bind rRNA by itself. It is important during the early stages of 50S assembly. This Bartonella quintana (strain Toulouse) (Rochalimaea quintana) protein is Large ribosomal subunit protein uL13.